Reading from the N-terminus, the 338-residue chain is Cilia- and flagella-associated protein 36 (338 aa).

The stretch at 142-179 (ISDLEQEEMKLVSEALRLSKEEYEREQLRRSAKELNCT) forms a coiled coil. Disordered stretches follow at residues 175-220 (ELNC…ESPY) and 281-314 (KKQESKKMAHNSEVHEEKATCSKQEMTEEEKKSL). A compositionally biased stretch (polar residues) spans 187 to 202 (KQSNGSERTPSNTELP). Positions 255–330 (NLSQAEKEQL…AEKLKEEVIL (76 aa)) form a coiled coil.

This sequence belongs to the CFAP36 family.

It is found in the nucleus. The protein resides in the cytoplasm. The protein localises to the cell projection. It localises to the cilium. Its subcellular location is the flagellum. This is Cilia- and flagella-associated protein 36 from Xenopus laevis (African clawed frog).